The following is a 361-amino-acid chain: Histidinol-phosphate aminotransferase (361 aa).

Lys219 is modified (N6-(pyridoxal phosphate)lysine).

Belongs to the class-II pyridoxal-phosphate-dependent aminotransferase family. Histidinol-phosphate aminotransferase subfamily. In terms of assembly, homodimer. Pyridoxal 5'-phosphate serves as cofactor.

The catalysed reaction is L-histidinol phosphate + 2-oxoglutarate = 3-(imidazol-4-yl)-2-oxopropyl phosphate + L-glutamate. It participates in amino-acid biosynthesis; L-histidine biosynthesis; L-histidine from 5-phospho-alpha-D-ribose 1-diphosphate: step 7/9. The polypeptide is Histidinol-phosphate aminotransferase (Acinetobacter baylyi (strain ATCC 33305 / BD413 / ADP1)).